Consider the following 23-residue polypeptide: Laccase-1 (23 aa).

This sequence belongs to the multicopper oxidase family. Requires Cu cation as cofactor.

Its subcellular location is the secreted. It carries out the reaction 4 hydroquinone + O2 = 4 benzosemiquinone + 2 H2O. With respect to regulation, strongly inhibited by sodium azide, sodium cyanide, Li(+), Sn(+), Hg(2+), and the disulfide-reducing agents beta-mercaptoethanol, dithiothreitol and thioglycolic acid. Moderately inhibited by Mn(2+) and Fe(2+), inhibition by these metal ions is stronger at 0.1 mM than at 1 mM. Moderately inhibited by Cu(2+). In terms of biological role, lignin degradation and detoxification of lignin-derived products. Demethylates eucalyptus hard wood lignin. Has high activity against the non-phenolic heterocyclic compound ABTS, and lower activity against the phenolic substrates syringic acid, caffeic acid, syringaldazine, vanillic acid, catechol and levodihydroxyphenylalanine. In Galerina sp, this protein is Laccase-1.